Consider the following 354-residue polypeptide: Anthranilate phosphoribosyltransferase (354 aa).

This sequence belongs to the anthranilate phosphoribosyltransferase family.

It carries out the reaction N-(5-phospho-beta-D-ribosyl)anthranilate + diphosphate = 5-phospho-alpha-D-ribose 1-diphosphate + anthranilate. Its pathway is amino-acid biosynthesis; L-tryptophan biosynthesis; L-tryptophan from chorismate: step 2/5. The polypeptide is Anthranilate phosphoribosyltransferase (trp4) (Schizosaccharomyces pombe (strain 972 / ATCC 24843) (Fission yeast)).